Reading from the N-terminus, the 384-residue chain is Lipid-A-disaccharide synthase 1 (384 aa).

Belongs to the LpxB family.

It carries out the reaction a lipid X + a UDP-2-N,3-O-bis[(3R)-3-hydroxyacyl]-alpha-D-glucosamine = a lipid A disaccharide + UDP + H(+). The protein operates within bacterial outer membrane biogenesis; LPS lipid A biosynthesis. Condensation of UDP-2,3-diacylglucosamine and 2,3-diacylglucosamine-1-phosphate to form lipid A disaccharide, a precursor of lipid A, a phosphorylated glycolipid that anchors the lipopolysaccharide to the outer membrane of the cell. The sequence is that of Lipid-A-disaccharide synthase 1 from Legionella pneumophila (strain Paris).